Reading from the N-terminus, the 206-residue chain is Small ribosomal subunit protein uS4 (206 aa).

An S4 RNA-binding domain is found at 96–156 (CRLDNVVYRM…EKSKNQLRIA (61 aa)).

Belongs to the universal ribosomal protein uS4 family. In terms of assembly, part of the 30S ribosomal subunit. Contacts protein S5. The interaction surface between S4 and S5 is involved in control of translational fidelity.

Its function is as follows. One of the primary rRNA binding proteins, it binds directly to 16S rRNA where it nucleates assembly of the body of the 30S subunit. In terms of biological role, with S5 and S12 plays an important role in translational accuracy. This is Small ribosomal subunit protein uS4 from Ectopseudomonas mendocina (strain ymp) (Pseudomonas mendocina).